A 571-amino-acid polypeptide reads, in one-letter code: Proline--tRNA ligase (571 aa).

It belongs to the class-II aminoacyl-tRNA synthetase family. ProS type 1 subfamily. Homodimer.

It localises to the cytoplasm. The enzyme catalyses tRNA(Pro) + L-proline + ATP = L-prolyl-tRNA(Pro) + AMP + diphosphate. Catalyzes the attachment of proline to tRNA(Pro) in a two-step reaction: proline is first activated by ATP to form Pro-AMP and then transferred to the acceptor end of tRNA(Pro). As ProRS can inadvertently accommodate and process non-cognate amino acids such as alanine and cysteine, to avoid such errors it has two additional distinct editing activities against alanine. One activity is designated as 'pretransfer' editing and involves the tRNA(Pro)-independent hydrolysis of activated Ala-AMP. The other activity is designated 'posttransfer' editing and involves deacylation of mischarged Ala-tRNA(Pro). The misacylated Cys-tRNA(Pro) is not edited by ProRS. The polypeptide is Proline--tRNA ligase (Pseudomonas syringae pv. tomato (strain ATCC BAA-871 / DC3000)).